Reading from the N-terminus, the 410-residue chain is Multifunctional CCA protein (410 aa).

Residues G8 and R11 each coordinate ATP. Residues G8 and R11 each contribute to the CTP site. Mg(2+) is bound by residues E21 and D23. ATP contacts are provided by R91, R137, and R140. The CTP site is built by R91, R137, and R140. An HD domain is found at 228 to 329 (TLLHQFLCLK…WKLFKSLDIL (102 aa)).

Belongs to the tRNA nucleotidyltransferase/poly(A) polymerase family. Bacterial CCA-adding enzyme type 1 subfamily. Monomer. Can also form homodimers and oligomers. It depends on Mg(2+) as a cofactor. Ni(2+) serves as cofactor.

The catalysed reaction is a tRNA precursor + 2 CTP + ATP = a tRNA with a 3' CCA end + 3 diphosphate. The enzyme catalyses a tRNA with a 3' CCA end + 2 CTP + ATP = a tRNA with a 3' CCACCA end + 3 diphosphate. Functionally, catalyzes the addition and repair of the essential 3'-terminal CCA sequence in tRNAs without using a nucleic acid template. Adds these three nucleotides in the order of C, C, and A to the tRNA nucleotide-73, using CTP and ATP as substrates and producing inorganic pyrophosphate. tRNA 3'-terminal CCA addition is required both for tRNA processing and repair. Also involved in tRNA surveillance by mediating tandem CCA addition to generate a CCACCA at the 3' terminus of unstable tRNAs. While stable tRNAs receive only 3'-terminal CCA, unstable tRNAs are marked with CCACCA and rapidly degraded. The polypeptide is Multifunctional CCA protein (Alcanivorax borkumensis (strain ATCC 700651 / DSM 11573 / NCIMB 13689 / SK2)).